The following is a 398-amino-acid chain: Argininosuccinate synthase (398 aa).

Position 8–16 (8–16) interacts with ATP; it reads AYSGGLDTT. Tyr87 lines the L-citrulline pocket. Position 117 (Gly117) interacts with ATP. Residues Thr119, Asn123, and Asp124 each contribute to the L-aspartate site. Residue Asn123 coordinates L-citrulline. L-citrulline contacts are provided by Arg127, Ser175, Glu259, and Tyr271.

This sequence belongs to the argininosuccinate synthase family. Type 1 subfamily. As to quaternary structure, homotetramer.

The protein resides in the cytoplasm. It catalyses the reaction L-citrulline + L-aspartate + ATP = 2-(N(omega)-L-arginino)succinate + AMP + diphosphate + H(+). The protein operates within amino-acid biosynthesis; L-arginine biosynthesis; L-arginine from L-ornithine and carbamoyl phosphate: step 2/3. The protein is Argininosuccinate synthase of Corynebacterium jeikeium (strain K411).